Reading from the N-terminus, the 1092-residue chain is Neural cell adhesion molecule 1-B (1092 aa).

The first 19 residues, 1 to 19 (MLHIKDLIWTLYFIGAAVA), serve as a signal peptide directing secretion. Ig-like C2-type domains follow at residues 20–108 (LEVN…GTVN), 113–202 (QKLT…KDIQ), 208–295 (PPLI…EAIV), 303–397 (PKMT…FEVQ), and 400–489 (PKIR…FILV). At 20–705 (LEVNIVPDQG…ATSASTGLGT (686 aa)) the chain is on the extracellular side. Intrachain disulfides connect C41–C93 and C136–C186. N82 carries an N-linked (GlcNAc...) asparagine glycan. Residues 149 to 153 (RHKGK) and 158 to 162 (KKDVR) contribute to the heparin site. N219 carries an N-linked (GlcNAc...) asparagine glycan. C232 and C282 are joined by a disulfide. N-linked (GlcNAc...) asparagine glycans are attached at residues N310, N341, N417, N443, and N472. Cysteines 323 and 379 form a disulfide. An intrachain disulfide couples C420 to C473. 2 consecutive Fibronectin type-III domains span residues 493–592 (TPSS…TQPV) and 595–691 (EPSA…TAKP). Residues 706–723 (GAIVGILIVTFVLLLVVV) traverse the membrane as a helical segment. Topologically, residues 724–1092 (DVTCFFLNKC…TQRNVNESKA (369 aa)) are cytoplasmic. A compositionally biased stretch (basic and acidic residues) spans 754–784 (KDIEEGKAAFSKDESKEPIVEVRTEEERTPN). Disordered stretches follow at residues 754–1005 (KDIE…GGTF) and 1024–1092 (TPAA…ESKA). Low complexity-rich tracts occupy residues 820–832 (TTVT…ITET) and 839–851 (SPTS…TSST). Residues 860–871 (DSNTVQSVQATP) show a composition bias toward polar residues. A compositionally biased stretch (low complexity) spans 917-929 (PSAATSAAEPPTA). The segment covering 968-978 (AQPSTVKSPTE) has biased composition (polar residues). Positions 1050-1068 (AKTEKTQVEENSKPEETDV) are enriched in basic and acidic residues. Over residues 1080 to 1092 (NEATQRNVNESKA) the composition is skewed to polar residues.

In terms of processing, polysialylated by ST8SIA2 and ST8SIA4. Polysialylation modulates cell interactions by confering both attractive and repulsive properties that are highly regulated by ST8SIA2 and ST8SIA4. Polysialylation is formed on a-2,3-linked sialic acid of core glycans.

The protein localises to the cell membrane. This protein is a cell adhesion molecule involved in neuron-neuron adhesion, neurite fasciculation, outgrowth of neurites, etc. The chain is Neural cell adhesion molecule 1-B from Xenopus laevis (African clawed frog).